Here is a 135-residue protein sequence, read N- to C-terminus: Ribosome-binding factor A (135 aa).

The tract at residues 115–135 is disordered; sequence VNEDKRKQQDSGREEDQAGEE. Residues 116–135 are compositionally biased toward basic and acidic residues; sequence NEDKRKQQDSGREEDQAGEE.

Belongs to the RbfA family. In terms of assembly, monomer. Binds 30S ribosomal subunits, but not 50S ribosomal subunits or 70S ribosomes.

Its subcellular location is the cytoplasm. One of several proteins that assist in the late maturation steps of the functional core of the 30S ribosomal subunit. Associates with free 30S ribosomal subunits (but not with 30S subunits that are part of 70S ribosomes or polysomes). Required for efficient processing of 16S rRNA. May interact with the 5'-terminal helix region of 16S rRNA. In Vibrio campbellii (strain ATCC BAA-1116), this protein is Ribosome-binding factor A.